The following is a 273-amino-acid chain: Dermonecrotic toxin LvSicTox-alphaIC1ai (273 aa).

H5 is a catalytic residue. Mg(2+)-binding residues include E25 and D27. H41 acts as the Nucleophile in catalysis. 2 cysteine pairs are disulfide-bonded: C45–C51 and C47–C190. D85 is a Mg(2+) binding site.

Belongs to the arthropod phospholipase D family. Class II subfamily. Mg(2+) serves as cofactor. Expressed by the venom gland.

Its subcellular location is the secreted. It carries out the reaction an N-(acyl)-sphingosylphosphocholine = an N-(acyl)-sphingosyl-1,3-cyclic phosphate + choline. The catalysed reaction is an N-(acyl)-sphingosylphosphoethanolamine = an N-(acyl)-sphingosyl-1,3-cyclic phosphate + ethanolamine. The enzyme catalyses a 1-acyl-sn-glycero-3-phosphocholine = a 1-acyl-sn-glycero-2,3-cyclic phosphate + choline. It catalyses the reaction a 1-acyl-sn-glycero-3-phosphoethanolamine = a 1-acyl-sn-glycero-2,3-cyclic phosphate + ethanolamine. Its function is as follows. Dermonecrotic toxins cleave the phosphodiester linkage between the phosphate and headgroup of certain phospholipids (sphingolipid and lysolipid substrates), forming an alcohol (often choline) and a cyclic phosphate. This toxin acts on sphingomyelin (SM). It may also act on ceramide phosphoethanolamine (CPE), lysophosphatidylcholine (LPC) and lysophosphatidylethanolamine (LPE), but not on lysophosphatidylserine (LPS), and lysophosphatidylglycerol (LPG). It acts by transphosphatidylation, releasing exclusively cyclic phosphate products as second products. Induces dermonecrosis, hemolysis, increased vascular permeability, edema, inflammatory response, and platelet aggregation. The chain is Dermonecrotic toxin LvSicTox-alphaIC1ai from Loxosceles variegata (Recluse spider).